Here is a 327-residue protein sequence, read N- to C-terminus: Polyprenyl transferase andD (327 aa).

The next 8 helical transmembrane spans lie at 49-69, 81-101, 140-160, 174-194, 201-221, 244-264, 271-291, and 307-327; these read LGYI…ASIA, ITLL…WDDI, FAFV…MLFF, PQLI…GLNL, IPMA…DIIY, CLDA…VIAG, APFF…LAMA, and CCTS…VWRS.

The protein belongs to the UbiA prenyltransferase family. The cofactor is Mg(2+).

The protein localises to the membrane. It participates in secondary metabolite biosynthesis; terpenoid biosynthesis. Functionally, polyprenyl transferase; part of the gene cluster that mediates the biosynthesis of anditomin, a fungal meroterpenoid. The first step of the pathway is the synthesis of 3,5-dimethylorsellinic acid (DMOA) by the polyketide synthase andM. DMOA is then converted to the phthalide compound 5,7-dihydroxy-4,6-dimethylphthalide (DHDMP) by the cytochrome P450 monooxygenase andK, which is further prenylated by the prenyltransferase andD to yield farnesyl-DHDMP. Further epoxidation by the FAD-dependent monooxygenase andE leads to epoxyfarnesyl-DHDMP. The next step involves the terpene cyclase andB that converts epoxyfarnesyl-DHDMP into preandiloid A through opening of the epoxide ring followed by the cyclization of the farnesyl moiety. Preandiloid A is in turn oxidized at the C-3 hydroxyl group to yield preandiloid B by the dehydrogenase andC. The dioxygenase andA is solely responsible for the dehydrogenation of preandiloid B leading to the enone preandiloid C, as well as for the intriguing structural rearrangement to generate the bicyclo[2.2.2]octane core, transforming preandiloid C into andiconin. FAD-binding monooxygenase andJ then produces andilesin D which is reduced by dehydrogenase andI to yield andilesin A. Action of acetyltransferase andG followed by a spontaneous acetate elimination leads then to andilesin B, which is in turn substrate of the short chain dehydrogenase andH to yield andilesin C. Finally, the dioxygenase andF catalyzes the transformation of andilesin C to anditomin. The protein is Polyprenyl transferase andD of Emericella variicolor (Aspergillus stellatus).